The chain runs to 444 residues: DNA repair protein RadA (444 aa).

The C4-type zinc-finger motif lies at 10–27 (CQECGYKSVKWLGKCPSC). 91-98 (GEPGIGKS) provides a ligand contact to ATP. Residues 247–251 (KNRFG) carry the RadA KNRFG motif motif. The segment at 345 to 444 (DVFVNVAGGM…HIQEAIEVLF (100 aa)) is lon-protease-like.

The protein belongs to the RecA family. RadA subfamily.

DNA-dependent ATPase involved in processing of recombination intermediates, plays a role in repairing DNA breaks. Stimulates the branch migration of RecA-mediated strand transfer reactions, allowing the 3' invading strand to extend heteroduplex DNA faster. Binds ssDNA in the presence of ADP but not other nucleotides, has ATPase activity that is stimulated by ssDNA and various branched DNA structures, but inhibited by SSB. Does not have RecA's homology-searching function. The protein is DNA repair protein RadA of Aquifex aeolicus (strain VF5).